Here is a 215-residue protein sequence, read N- to C-terminus: 3-demethoxyubiquinol 3-hydroxylase (215 aa).

Residues E64, E94, H97, E146, E178, and H181 each contribute to the Fe cation site.

The protein belongs to the COQ7 family. Fe cation is required as a cofactor.

The protein resides in the cell membrane. It carries out the reaction a 5-methoxy-2-methyl-3-(all-trans-polyprenyl)benzene-1,4-diol + AH2 + O2 = a 3-demethylubiquinol + A + H2O. It participates in cofactor biosynthesis; ubiquinone biosynthesis. Its function is as follows. Catalyzes the hydroxylation of 2-nonaprenyl-3-methyl-6-methoxy-1,4-benzoquinol during ubiquinone biosynthesis. In Pseudomonas fluorescens (strain ATCC BAA-477 / NRRL B-23932 / Pf-5), this protein is 3-demethoxyubiquinol 3-hydroxylase.